We begin with the raw amino-acid sequence, 61 residues long: MAKLSKMAQAKRKLKFPVRQYNRCPLCGRPRAFLRKFQMCRLCFRKRALQGEITGVIKSSW.

Zn(2+)-binding residues include Cys-24, Cys-27, Cys-40, and Cys-43.

The protein belongs to the universal ribosomal protein uS14 family. Zinc-binding uS14 subfamily. Part of the 30S ribosomal subunit. Contacts proteins S3 and S10. The cofactor is Zn(2+).

Binds 16S rRNA, required for the assembly of 30S particles and may also be responsible for determining the conformation of the 16S rRNA at the A site. The sequence is that of Small ribosomal subunit protein uS14 from Anaeromyxobacter sp. (strain Fw109-5).